Consider the following 349-residue polypeptide: Sensory histidine kinase/phosphatase NtrB (349 aa).

One can recognise a PAS domain in the interval 5 to 78 (TQPDAGQILN…SLEAGQGFTD (74 aa)). The region spanning 136–349 (GLAHEIKNPL…EFSVYLPIRK (214 aa)) is the Histidine kinase domain. H139 carries the post-translational modification Phosphohistidine; by autocatalysis. K329 contacts ATP.

Post-translationally, autophosphorylated.

It localises to the cytoplasm. The enzyme catalyses ATP + protein L-histidine = ADP + protein N-phospho-L-histidine.. In terms of biological role, member of the two-component regulatory system NtrB/NtrC, which controls expression of the nitrogen-regulated (ntr) genes in response to nitrogen limitation. Under conditions of nitrogen limitation, NtrB autophosphorylates and transfers the phosphoryl group to NtrC. In the presence of nitrogen, acts as a phosphatase that dephosphorylates and inactivates NtrC. This is Sensory histidine kinase/phosphatase NtrB (glnL) from Escherichia coli O157:H7.